A 415-amino-acid polypeptide reads, in one-letter code: Gamma-glutamyl phosphate reductase (415 aa).

It belongs to the gamma-glutamyl phosphate reductase family.

It localises to the cytoplasm. The catalysed reaction is L-glutamate 5-semialdehyde + phosphate + NADP(+) = L-glutamyl 5-phosphate + NADPH + H(+). Its pathway is amino-acid biosynthesis; L-proline biosynthesis; L-glutamate 5-semialdehyde from L-glutamate: step 2/2. Functionally, catalyzes the NADPH-dependent reduction of L-glutamate 5-phosphate into L-glutamate 5-semialdehyde and phosphate. The product spontaneously undergoes cyclization to form 1-pyrroline-5-carboxylate. The polypeptide is Gamma-glutamyl phosphate reductase (Ligilactobacillus salivarius (strain UCC118) (Lactobacillus salivarius)).